We begin with the raw amino-acid sequence, 107 residues long: Transcriptional regulator Rv3488 (107 aa).

Positions 16, 30, 34, and 101 each coordinate Cd(2+).

As to quaternary structure, homodimer.

Functionally, may have transcription regulation and metal-detoxifying functions through which it may enhance intracellular survival of mycobacteria. Binds to its own promoter region and to the Rv1999c promoter region. It displays strong affinity for cadmium ions, but can also bind zinc, manganese and nickel. Expression increases the intracellular survival of recombinant M.smegmatis in murine macrophage cell line and increases its tolerance to cadmium ions. The polypeptide is Transcriptional regulator Rv3488 (Mycobacterium tuberculosis (strain ATCC 25618 / H37Rv)).